A 363-amino-acid chain; its full sequence is Uroporphyrinogen decarboxylase (363 aa).

Substrate contacts are provided by residues 27 to 31 (RQAGR), aspartate 77, tyrosine 157, threonine 212, and histidine 333.

The protein belongs to the uroporphyrinogen decarboxylase family. In terms of assembly, homodimer.

The protein resides in the cytoplasm. It carries out the reaction uroporphyrinogen III + 4 H(+) = coproporphyrinogen III + 4 CO2. Its pathway is porphyrin-containing compound metabolism; protoporphyrin-IX biosynthesis; coproporphyrinogen-III from 5-aminolevulinate: step 4/4. Catalyzes the decarboxylation of four acetate groups of uroporphyrinogen-III to yield coproporphyrinogen-III. The polypeptide is Uroporphyrinogen decarboxylase (Cupriavidus pinatubonensis (strain JMP 134 / LMG 1197) (Cupriavidus necator (strain JMP 134))).